The primary structure comprises 334 residues: S-adenosylmethionine:tRNA ribosyltransferase-isomerase (334 aa).

It belongs to the QueA family. Monomer.

The protein localises to the cytoplasm. It catalyses the reaction 7-aminomethyl-7-carbaguanosine(34) in tRNA + S-adenosyl-L-methionine = epoxyqueuosine(34) in tRNA + adenine + L-methionine + 2 H(+). It functions in the pathway tRNA modification; tRNA-queuosine biosynthesis. In terms of biological role, transfers and isomerizes the ribose moiety from AdoMet to the 7-aminomethyl group of 7-deazaguanine (preQ1-tRNA) to give epoxyqueuosine (oQ-tRNA). The protein is S-adenosylmethionine:tRNA ribosyltransferase-isomerase of Thermosipho melanesiensis (strain DSM 12029 / CIP 104789 / BI429).